A 164-amino-acid polypeptide reads, in one-letter code: MDAVMFGLETPLMAALQHLLDVPDGDAGAGGDNKTGSGGSATRTYVRDARAMAATPADVKELPGAYAFVVDMPGLGTGDIRVQVEDERVLVVSGERRREEREDDAKYLRMERRMGKFMRKFVLPDNADVDKVAAVCRDGVLTVTVEKLPPPEPKKPKTIEVKVA.

One can recognise a sHSP domain in the interval 48–164 (DARAMAATPA…KPKTIEVKVA (117 aa)).

The protein belongs to the small heat shock protein (HSP20) family.

Its subcellular location is the cytoplasm. This chain is 17.8 kDa class II heat shock protein, found in Zea mays (Maize).